Consider the following 762-residue polypeptide: Endonuclease MutS2 (762 aa).

Residue 333–340 coordinates ATP; the sequence is GVNAGGKT. The Smr domain occupies 688–762; it reads LDLRGQRSEE…GGSGVKIVKL (75 aa).

This sequence belongs to the DNA mismatch repair MutS family. MutS2 subfamily. Homodimer. Binds to stalled ribosomes, contacting rRNA.

Its function is as follows. Endonuclease that is involved in the suppression of homologous recombination and thus may have a key role in the control of bacterial genetic diversity. In terms of biological role, acts as a ribosome collision sensor, splitting the ribosome into its 2 subunits. Detects stalled/collided 70S ribosomes which it binds and splits by an ATP-hydrolysis driven conformational change. Acts upstream of the ribosome quality control system (RQC), a ribosome-associated complex that mediates the extraction of incompletely synthesized nascent chains from stalled ribosomes and their subsequent degradation. Probably generates substrates for RQC. The sequence is that of Endonuclease MutS2 from Helicobacter pylori (strain J99 / ATCC 700824) (Campylobacter pylori J99).